Consider the following 455-residue polypeptide: SUN domain-containing protein 2 (455 aa).

Polar residues predominate over residues methionine 1–proline 12. Residues methionine 1 to isoleucine 99 are disordered. Serine 2 is subject to N-acetylserine. Topologically, residues serine 2–lysine 105 are nuclear. Serine 63 is subject to Phosphoserine. Low complexity predominate over residues lysine 74 to glutamine 88. A Nuclear localization signal motif is present at residues glutamine 88–glutamine 95. A helical transmembrane segment spans residues threonine 106–isoleucine 128. Residues arginine 129–alanine 455 are Perinuclear space-facing. The stretch at leucine 201–lysine 225 forms a coiled coil. An SUN domain is found at glycine 285 to leucine 447.

Forms homomers (e.g. dimers, trimers and tetramers) and heteromers with SUN1. Interacts with SUN3, SUN4 and TIK. Core component of the LINC complex which is composed of inner nuclear membrane SUN domain-containing proteins coupled to outer nuclear membrane WIP and WIT proteins. The LINC complex also involves nucleoskeletal proteins CRWN/LINC and possibly KAKU4 and the cytoskeletal myosin KAKU1. Interacts with LINC1, WIP1, WIP2 and WIP3 at the nuclear envelope (NE). Interacts with SINE1, SINE2, SINE3 and SINE4. Interacts with NEAP1, NEA2 and NEAP3. As to expression, expressed in roots, hypocotyls, cotyledons and leaves and inflorescences.

The protein localises to the nucleus inner membrane. Its subcellular location is the cytoplasm. It localises to the cytoskeleton. It is found in the phragmoplast. The protein resides in the endoplasmic reticulum membrane. The protein localises to the nucleus envelope. Its function is as follows. Component of SUN-protein-containing multivariate complexes also called LINC complexes which link the nucleoskeleton and cytoskeleton by providing versatile outer nuclear membrane attachment sites for cytoskeletal filaments. Required for the maintenance and/or formation of polarized nuclear shape in root hairs. Modulates the anchoring and mobility of WIP proteins in the nuclear envelope (NE). In association with SUN1, may be involved in telomere attachment to nuclear envelope in the prophase of meiosis. As component of the SUN-WIP-WIT2-KAKU1 complex, mediates the transfer of cytoplasmic forces to the nuclear envelope (NE), leading to nuclear shape changes. This chain is SUN domain-containing protein 2, found in Arabidopsis thaliana (Mouse-ear cress).